A 152-amino-acid polypeptide reads, in one-letter code: Antiholin-like protein LrgA (152 aa).

Transmembrane regions (helical) follow at residues 23 to 43, 45 to 65, 77 to 97, and 108 to 128; these read YSIF…KIIE, FMPI…IALC, VGTA…ISVI, and ILII…TGFA.

This sequence belongs to the CidA/LrgA family. LrgA subfamily.

The protein localises to the cell membrane. Functionally, inhibits the expression or activity of extracellular murein hydrolases by interacting, possibly with LrgB, with the holin-like proteins CidA and/or CidB. The LrgAB and CidAB proteins may affect the proton motive force of the membrane. May be involved in programmed cell death (PCD), possibly triggering PCD in response to antibiotics and environmental stresses. The sequence is that of Antiholin-like protein LrgA from Staphylococcus epidermidis (strain ATCC 35984 / DSM 28319 / BCRC 17069 / CCUG 31568 / BM 3577 / RP62A).